A 247-amino-acid polypeptide reads, in one-letter code: PABIR family member 2 (247 aa).

The disordered stretch occupies residues 1-23; sequence MAQEKMELDLEPDTSYGGTLRRS. Residue Ala2 is modified to N-acetylalanine. 5 positions are modified to phosphoserine: Ser25, Ser33, Ser50, Ser58, and Leu63. Positions 82–104 are disordered; that stretch reads ISQSWDESLSLSDSDFDKPEKLY. A compositionally biased stretch (low complexity) spans 83-94; sequence SQSWDESLSLSD. Residue Thr112 is modified to Phosphothreonine. Phosphoserine is present on residues Ser115 and Ser119. Arg122 carries the post-translational modification Omega-N-methylarginine. Disordered regions lie at residues 129 to 152, 158 to 177, and 202 to 230; these read VSSSGLPPSPVPSPRRFSRRSQSP, PSVLGPLKRKGEMETESQPK, and DILDGSSSSSGLSSDPLAKGSATAESPVA. Residues Ser137 and Ser141 each carry the phosphoserine modification. The span at 166–176 shows a compositional bias: basic and acidic residues; it reads RKGEMETESQP. Low complexity predominate over residues 202–216; the sequence is DILDGSSSSSGLSSD.

Belongs to the FAM122 family. Isoform 3 and isoform 4 are phosphorylated on Ser-62 and Ser-64.

This chain is PABIR family member 2, found in Homo sapiens (Human).